Here is a 425-residue protein sequence, read N- to C-terminus: Serine--tRNA ligase (425 aa).

230–232 (TAE) provides a ligand contact to L-serine. An ATP-binding site is contributed by 261 to 263 (RSE). L-serine is bound at residue Glu-284. Position 348-351 (348-351 (EISS)) interacts with ATP. Position 384 (Ser-384) interacts with L-serine.

This sequence belongs to the class-II aminoacyl-tRNA synthetase family. Type-1 seryl-tRNA synthetase subfamily. In terms of assembly, homodimer. The tRNA molecule binds across the dimer.

The protein resides in the cytoplasm. It carries out the reaction tRNA(Ser) + L-serine + ATP = L-seryl-tRNA(Ser) + AMP + diphosphate + H(+). The catalysed reaction is tRNA(Sec) + L-serine + ATP = L-seryl-tRNA(Sec) + AMP + diphosphate + H(+). It participates in aminoacyl-tRNA biosynthesis; selenocysteinyl-tRNA(Sec) biosynthesis; L-seryl-tRNA(Sec) from L-serine and tRNA(Sec): step 1/1. Functionally, catalyzes the attachment of serine to tRNA(Ser). Is also able to aminoacylate tRNA(Sec) with serine, to form the misacylated tRNA L-seryl-tRNA(Sec), which will be further converted into selenocysteinyl-tRNA(Sec). This Streptococcus pyogenes serotype M49 (strain NZ131) protein is Serine--tRNA ligase.